An 882-amino-acid chain; its full sequence is DNA mismatch repair protein MutS (882 aa).

Residue 640 to 647 (GPNMGGKS) participates in ATP binding.

Belongs to the DNA mismatch repair MutS family.

This protein is involved in the repair of mismatches in DNA. It is possible that it carries out the mismatch recognition step. This protein has a weak ATPase activity. The protein is DNA mismatch repair protein MutS of Albidiferax ferrireducens (strain ATCC BAA-621 / DSM 15236 / T118) (Rhodoferax ferrireducens).